The following is a 61-amino-acid chain: UPF0434 protein Avin_14770 (61 aa).

It belongs to the UPF0434 family.

This chain is UPF0434 protein Avin_14770, found in Azotobacter vinelandii (strain DJ / ATCC BAA-1303).